The sequence spans 351 residues: Protein MGF 360-12L (351 aa).

The stretch at 57–89 (DLNMALVKAVKENNYSLIKLFTEWGANINYGLI) is one ANK repeat.

The protein belongs to the asfivirus MGF 360 family.

Functionally, plays a role in virus cell tropism, and may be required for efficient virus replication in macrophages. The chain is Protein MGF 360-12L from Ornithodoros (relapsing fever ticks).